The following is a 509-amino-acid chain: ATP synthase subunit alpha (509 aa).

Residue Gly-169 to Thr-176 participates in ATP binding.

Belongs to the ATPase alpha/beta chains family. In terms of assembly, F-type ATPases have 2 components, CF(1) - the catalytic core - and CF(0) - the membrane proton channel. CF(1) has five subunits: alpha(3), beta(3), gamma(1), delta(1), epsilon(1). CF(0) has three main subunits: a(1), b(2) and c(9-12). The alpha and beta chains form an alternating ring which encloses part of the gamma chain. CF(1) is attached to CF(0) by a central stalk formed by the gamma and epsilon chains, while a peripheral stalk is formed by the delta and b chains.

The protein localises to the cell inner membrane. The enzyme catalyses ATP + H2O + 4 H(+)(in) = ADP + phosphate + 5 H(+)(out). In terms of biological role, produces ATP from ADP in the presence of a proton gradient across the membrane. The alpha chain is a regulatory subunit. This chain is ATP synthase subunit alpha, found in Methylocella silvestris (strain DSM 15510 / CIP 108128 / LMG 27833 / NCIMB 13906 / BL2).